The primary structure comprises 120 residues: uncharacterized protein (120 aa).

The RING-type zinc-finger motif lies at 70 to 109 (CARCRRSLTLTPAVSCLPCGHSCLCTDCDQLFANVCFECK).

This is an uncharacterized protein from Orgyia pseudotsugata multicapsid polyhedrosis virus (OpMNPV).